The following is a 599-amino-acid chain: Kelch repeat and BTB domain-containing protein 8 (599 aa).

The tract at residues 1 to 25 is disordered; sequence MAASADLSKSSPTPNGIPSSDTAND. The segment covering 7-25 has biased composition (polar residues); sequence LSKSSPTPNGIPSSDTAND. Residues 49–117 form the BTB domain; that stretch reads TDIVVEVDHG…AYTSRVILTE (69 aa). The 103-residue stretch at 152–254 folds into the BACK domain; that stretch reads SIGVFIFADH…MEDTFIEKIP (103 aa). Kelch repeat units lie at residues 334 to 388, 389 to 439, 441 to 479, 481 to 530, and 540 to 586; these read DIYI…YCCG, KMYA…EHKE, IYVLQGEFFLFYEPQKDYWGFLTPMTVPRIQGLAAVYKD, IYYI…LFQN, and QVTV…FECA.

The protein belongs to the KBTBD8 family. As to quaternary structure, component of the BCR(KBTBD8) E3 ubiquitin ligase complex, at least composed of CUL3, KBTBD8 and RBX1.

Its subcellular location is the cytoplasm. The protein localises to the cytoskeleton. It is found in the spindle. It localises to the golgi apparatus. Functionally, substrate-specific adapter of a BCR (BTB-CUL3-RBX1) E3 ubiquitin ligase complex that acts as a regulator of neural crest specification. The BCR(KBTBD8) complex acts by mediating monoubiquitination of NOLC1 and TCOF1: monoubiquitination promotes the formation of a NOLC1-TCOF1 complex that acts as a platform to connect RNA polymerase I with enzymes responsible for ribosomal processing and modification, leading to remodel the translational program of differentiating cells in favor of neural crest specification. In Mus musculus (Mouse), this protein is Kelch repeat and BTB domain-containing protein 8 (Kbtbd8).